A 51-amino-acid polypeptide reads, in one-letter code: Large ribosomal subunit protein bL33 (51 aa).

The protein belongs to the bacterial ribosomal protein bL33 family.

The protein is Large ribosomal subunit protein bL33 of Nitrosococcus oceani (strain ATCC 19707 / BCRC 17464 / JCM 30415 / NCIMB 11848 / C-107).